The chain runs to 298 residues: Pantothenate synthetase (298 aa).

30-37 contacts ATP; the sequence is MGNLHEGH. The active-site Proton donor is the His37. Position 61 (Gln61) interacts with (R)-pantoate. Residue Gln61 participates in beta-alanine binding. An ATP-binding site is contributed by 149–152; the sequence is GEKD. Gln155 serves as a coordination point for (R)-pantoate. Residues Val178 and 186–189 contribute to the ATP site; that span reads MSSR.

The protein belongs to the pantothenate synthetase family. As to quaternary structure, homodimer.

Its subcellular location is the cytoplasm. The enzyme catalyses (R)-pantoate + beta-alanine + ATP = (R)-pantothenate + AMP + diphosphate + H(+). It functions in the pathway cofactor biosynthesis; (R)-pantothenate biosynthesis; (R)-pantothenate from (R)-pantoate and beta-alanine: step 1/1. Catalyzes the condensation of pantoate with beta-alanine in an ATP-dependent reaction via a pantoyl-adenylate intermediate. The chain is Pantothenate synthetase from Aliivibrio salmonicida (strain LFI1238) (Vibrio salmonicida (strain LFI1238)).